We begin with the raw amino-acid sequence, 228 residues long: Mating-type protein A1 (228 aa).

Residues 120 to 140 (MSFDTEHECTDTSEDISDKSE) show a composition bias toward basic and acidic residues. A disordered region spans residues 120–149 (MSFDTEHECTDTSEDISDKSEISSTNSDNP). The homeobox DNA-binding region spans 155-214 (PTYKRSFIKHESRGILEKIFKVKQCPNTSERLYIAQKLDLTPSQVRIWFTNKRMRAKKHT).

Belongs to the MATA1 family. Forms a heterodimer with ALPHA2.

Its subcellular location is the nucleus. Functionally, mating type proteins are sequence specific DNA-binding proteins that act as master switches in yeast differentiation by controlling gene expression in a cell type-specific fashion. Transcriptional corepressor that acts in conjunction with ALPHA2 to repress transcription of haploid-specific genes. This is Mating-type protein A1 (MATA1) from Kluyveromyces lactis (strain ATCC 8585 / CBS 2359 / DSM 70799 / NBRC 1267 / NRRL Y-1140 / WM37) (Yeast).